The following is a 476-amino-acid chain: ATP synthase subunit beta (476 aa).

158 to 165 (GGAGVGKT) provides a ligand contact to ATP.

Belongs to the ATPase alpha/beta chains family. In terms of assembly, F-type ATPases have 2 components, CF(1) - the catalytic core - and CF(0) - the membrane proton channel. CF(1) has five subunits: alpha(3), beta(3), gamma(1), delta(1), epsilon(1). CF(0) has three main subunits: a(1), b(2) and c(9-12). The alpha and beta chains form an alternating ring which encloses part of the gamma chain. CF(1) is attached to CF(0) by a central stalk formed by the gamma and epsilon chains, while a peripheral stalk is formed by the delta and b chains.

It is found in the cell inner membrane. It carries out the reaction ATP + H2O + 4 H(+)(in) = ADP + phosphate + 5 H(+)(out). Produces ATP from ADP in the presence of a proton gradient across the membrane. The catalytic sites are hosted primarily by the beta subunits. This chain is ATP synthase subunit beta, found in Paracidovorax citrulli (strain AAC00-1) (Acidovorax citrulli).